We begin with the raw amino-acid sequence, 584 residues long: Protein spire homolog 1 (584 aa).

A disordered region spans residues 1–30 (MANTVEADGSNDEGYEAAEEGPEDEEDEKR). A KIND domain is found at 1-73 (MANTVEADGS…RALFAETMEL (73 aa)). The segment covering 9 to 28 (GSNDEGYEAAEEGPEDEEDE) has biased composition (acidic residues). The stretch at 71–99 (MELHTFLAKVKSAKENLKKIQEMEKSDES) forms a coiled coil. 2 consecutive WH2 domains span residues 147–165 (PYEMLMDDIRCKRYTLRKV) and 211–228 (LHERILEEIKAERKLRPV). Residues 224–238 (KLRPVSPEEIRRSRL) show a composition bias toward basic and acidic residues. The interval 224 to 366 (KLRPVSPEEI…PTNVRQFLPP (143 aa)) is disordered. Serine 229 bears the Phosphoserine mark. Residues 242 to 272 (TPESTKNLMESSMVNGGLTSQTKENGLSSAE) show a composition bias toward polar residues. A phosphoserine mark is found at serine 292, serine 293, and serine 295. Residues 302 to 320 (KSTSSSSVSPSFPEEPVLE) are compositionally biased toward low complexity. At threonine 337 the chain carries Phosphothreonine. Residues 340–356 (PERRQPPQRRHSIEKET) are compositionally biased toward basic and acidic residues. The segment covering 357 to 366 (PTNVRQFLPP) has biased composition (polar residues). Residues 384-404 (LALTVEEVMHIRQVLVKAELE) are spir-box. Phosphoserine is present on residues serine 506, serine 510, and serine 563.

The protein belongs to the spire family. Interacts with FMN2.

The protein resides in the cytoplasm. It is found in the cytoskeleton. The protein localises to the cytosol. It localises to the cleavage furrow. Its subcellular location is the perinuclear region. The protein resides in the cell membrane. It is found in the cytoplasmic vesicle membrane. In terms of biological role, acts as an actin nucleation factor, remains associated with the slow-growing pointed end of the new filament. Involved in intracellular vesicle transport along actin fibers, providing a novel link between actin cytoskeleton dynamics and intracellular transport. Required for asymmetric spindle positioning and asymmetric cell division during meiosis. Required for normal formation of the cleavage furrow and for polar body extrusion during female germ cell meiosis. Also acts in the nucleus: together with FMN2, promotes assembly of nuclear actin filaments in response to DNA damage in order to facilitate movement of chromatin and repair factors after DNA damage. In addition, promotes innate immune signaling downstream of dsRNA sensing. Mechanistically, contributes to IRF3 phosphorylation and activation downstream of MAVS and upstream of TBK1. The protein is Protein spire homolog 1 (SPIRE1) of Macaca fascicularis (Crab-eating macaque).